The sequence spans 186 residues: uncharacterized protein (186 aa).

Residues 89–164 (LMSLGIGEDI…NTPLKLYSIY (76 aa)) form the Cupin type-2 domain. 117-124 (GIVKMGKS) provides a ligand contact to ATP.

This is an uncharacterized protein from Bacillus subtilis (strain 168).